Reading from the N-terminus, the 317-residue chain is Peroxidase 22.3 (317 aa).

A signal peptide spans 1 to 25; that stretch reads MASATNSSLSLMLLVAAAMASVASA. Gln-26 bears the Pyrrolidone carboxylic acid mark. Intrachain disulfides connect Cys-36–Cys-111 and Cys-69–Cys-74. The active-site Proton acceptor is the His-67. Positions 68, 71, 73, 75, and 77 each coordinate Ca(2+). Asn-112 is a glycosylation site (N-linked (GlcNAc...) asparagine). 2 disulfide bridges follow: Cys-117-Cys-312 and Cys-196-Cys-221. Residue Pro-159 participates in substrate binding. Residue Asn-171 is glycosylated (N-linked (GlcNAc...) asparagine). His-189 contributes to the heme b binding site. Thr-190 provides a ligand contact to Ca(2+). N-linked (GlcNAc...) asparagine glycosylation occurs at Asn-205. Ca(2+)-binding residues include Asp-236, Thr-239, and Asp-244.

The protein belongs to the peroxidase family. Classical plant (class III) peroxidase subfamily. Heme b serves as cofactor. Requires Ca(2+) as cofactor.

The protein resides in the secreted. The enzyme catalyses H2O2 + AH2 = A + 2 H2O. Removal of H(2)O(2), oxidation of toxic reductants, biosynthesis and degradation of lignin, suberization, auxin catabolism, response to environmental stresses such as wounding, pathogen attack and oxidative stress. These functions might be dependent on each isozyme/isoform in each plant tissue. This chain is Peroxidase 22.3, found in Oryza sativa subsp. japonica (Rice).